The following is an 861-amino-acid chain: Isoleucine--tRNA ligase (861 aa).

A 'HIGH' region motif is present at residues 57–67 (PYANGNIHVGH). Glu-549 serves as a coordination point for L-isoleucyl-5'-AMP. The 'KMSKS' region motif lies at 590–594 (KMSKS). ATP is bound at residue Lys-593.

This sequence belongs to the class-I aminoacyl-tRNA synthetase family. IleS type 1 subfamily. As to quaternary structure, monomer.

The protein localises to the cytoplasm. The catalysed reaction is tRNA(Ile) + L-isoleucine + ATP = L-isoleucyl-tRNA(Ile) + AMP + diphosphate. Catalyzes the attachment of isoleucine to tRNA(Ile). As IleRS can inadvertently accommodate and process structurally similar amino acids such as valine, to avoid such errors it has two additional distinct tRNA(Ile)-dependent editing activities. One activity is designated as 'pretransfer' editing and involves the hydrolysis of activated Val-AMP. The other activity is designated 'posttransfer' editing and involves deacylation of mischarged Val-tRNA(Ile). The sequence is that of Isoleucine--tRNA ligase from Mycoplasma pneumoniae (strain ATCC 29342 / M129 / Subtype 1) (Mycoplasmoides pneumoniae).